We begin with the raw amino-acid sequence, 874 residues long: Alanine--tRNA ligase (874 aa).

Positions 562, 566, 665, and 669 each coordinate Zn(2+).

This sequence belongs to the class-II aminoacyl-tRNA synthetase family. Requires Zn(2+) as cofactor.

It is found in the cytoplasm. It carries out the reaction tRNA(Ala) + L-alanine + ATP = L-alanyl-tRNA(Ala) + AMP + diphosphate. Its function is as follows. Catalyzes the attachment of alanine to tRNA(Ala) in a two-step reaction: alanine is first activated by ATP to form Ala-AMP and then transferred to the acceptor end of tRNA(Ala). Also edits incorrectly charged Ser-tRNA(Ala) and Gly-tRNA(Ala) via its editing domain. The protein is Alanine--tRNA ligase of Pseudomonas savastanoi pv. phaseolicola (strain 1448A / Race 6) (Pseudomonas syringae pv. phaseolicola (strain 1448A / Race 6)).